The chain runs to 503 residues: Discoidin, CUB and LCCL domain-containing protein 1 (503 aa).

The signal sequence occupies residues 1–25 (MGTGAGGPSVLALLFAVCAPLRLQA). Topologically, residues 26–250 (EELGDGCGHI…FTTPGMNITT (225 aa)) are extracellular. 4 disulfide bridges follow: Cys32–Cys59, Cys85–Cys103, Cys149–Cys165, and Cys169–Cys191. Residues 32 to 141 (CGHIVTSQDS…RGFLLTYASS (110 aa)) enclose the CUB domain. The N-linked (GlcNAc...) asparagine glycan is linked to Asn55. The LCCL domain maps to 143–239 (HPDLITCLER…RHGSLSEKRF (97 aa)). Asn247 carries N-linked (GlcNAc...) asparagine glycosylation. The chain crosses the membrane as a helical span at residues 251-271 (VAIPSVIFIALLLTGMGIFAI). Over 272–503 (CRKRKKKGNP…LNQTAMTALL (232 aa)) the chain is Cytoplasmic. The residue at position 305 (Ser305) is a Phosphoserine. At Thr406 the chain carries Phosphothreonine. The segment at 410–503 (QSGYRVPGPR…LNQTAMTALL (94 aa)) is disordered. Polar residues predominate over residues 494 to 503 (LNQTAMTALL).

The protein resides in the membrane. The sequence is that of Discoidin, CUB and LCCL domain-containing protein 1 (Dcbld1) from Mus musculus (Mouse).